The following is a 124-amino-acid chain: Small ribosomal subunit protein uS12 (124 aa).

A 3-methylthioaspartic acid modification is found at Asp-89. The segment at 105 to 124 (QGVKNRKQARSKYGAKMEKK) is disordered.

Belongs to the universal ribosomal protein uS12 family. In terms of assembly, part of the 30S ribosomal subunit. Contacts proteins S8 and S17. May interact with IF1 in the 30S initiation complex.

With S4 and S5 plays an important role in translational accuracy. Its function is as follows. Interacts with and stabilizes bases of the 16S rRNA that are involved in tRNA selection in the A site and with the mRNA backbone. Located at the interface of the 30S and 50S subunits, it traverses the body of the 30S subunit contacting proteins on the other side and probably holding the rRNA structure together. The combined cluster of proteins S8, S12 and S17 appears to hold together the shoulder and platform of the 30S subunit. This chain is Small ribosomal subunit protein uS12, found in Renibacterium salmoninarum (strain ATCC 33209 / DSM 20767 / JCM 11484 / NBRC 15589 / NCIMB 2235).